We begin with the raw amino-acid sequence, 98 residues long: Integration host factor subunit beta (98 aa).

The protein belongs to the bacterial histone-like protein family. In terms of assembly, heterodimer of an alpha and a beta chain.

This protein is one of the two subunits of integration host factor, a specific DNA-binding protein that functions in genetic recombination as well as in transcriptional and translational control. This Pseudomonas putida (strain W619) protein is Integration host factor subunit beta.